Here is a 296-residue protein sequence, read N- to C-terminus: Protoheme IX farnesyltransferase (296 aa).

Over 1-9 (MIFKQYLQV) the chain is Cytoplasmic. A helical transmembrane segment spans residues 10–28 (TKPGIIFGNLISVIGGFLL). At 29 to 37 (ASKGSIDYP) the chain is on the periplasmic side. Residues 38 to 56 (LFIYTLVGVSLVVASGCVF) traverse the membrane as a helical segment. Residues 57 to 78 (NNYIDRDIDRKMERTKNRVLVK) are Cytoplasmic-facing. A helical transmembrane segment spans residues 79-97 (GLISPAVSLVYATLLGIAG). Residues 98-107 (FMLLWFGANP) are Periplasmic-facing. Residues 108–126 (LACWLGVMGFVVYVGVYSL) traverse the membrane as a helical segment. Topologically, residues 127 to 197 (YMKRHSVYGT…YQAANIPVLP (71 aa)) are cytoplasmic. The chain crosses the membrane as a helical span at residues 198–216 (VVKGISVAKNHITLYIIAF). At 217–228 (AVATLMLSLGGY) the chain is on the periplasmic side. The chain crosses the membrane as a helical span at residues 229–247 (AGYKYLVVAAAVSVWWLGM). Topologically, residues 248–268 (ALRGYKVADDRIWARKLFGFS) are cytoplasmic. The helical transmembrane segment at 269–287 (IIAITALSVMMSVDFMVPD) threads the bilayer. The Periplasmic segment spans residues 288-296 (SHTLLAAVW).

It belongs to the UbiA prenyltransferase family. Protoheme IX farnesyltransferase subfamily.

The protein resides in the cell inner membrane. The enzyme catalyses heme b + (2E,6E)-farnesyl diphosphate + H2O = Fe(II)-heme o + diphosphate. Its pathway is porphyrin-containing compound metabolism; heme O biosynthesis; heme O from protoheme: step 1/1. Converts heme B (protoheme IX) to heme O by substitution of the vinyl group on carbon 2 of heme B porphyrin ring with a hydroxyethyl farnesyl side group. This Escherichia coli O1:K1 / APEC protein is Protoheme IX farnesyltransferase.